A 118-amino-acid polypeptide reads, in one-letter code: MRHNHGYRKLGRTSSHRAALLKNLTIAIVKAGKIETTLPKAKELRGYVEKLITRARKGDFNAHKFVFAHLQDKEATNMLVTEIAPKYATRNGGYTRIIKTRVRKGDAAEMAYIELVAQ.

This sequence belongs to the bacterial ribosomal protein bL17 family. Part of the 50S ribosomal subunit. Contacts protein L32.

The chain is Large ribosomal subunit protein bL17 from Campylobacter fetus subsp. fetus (strain 82-40).